A 1124-amino-acid chain; its full sequence is Phytochrome A (1124 aa).

The span at 1-19 (MSTTRPSQSSNNSGRSRNS) shows a compositional bias: low complexity. Residues 1–21 (MSTTRPSQSSNNSGRSRNSAR) form a disordered region. One can recognise a GAF domain in the interval 218–401 (SMERLCDTMV…VFAIHVNKEI (184 aa)). Phytochromobilin is bound at residue cysteine 323. PAS domains are found at residues 617–687 (VTSE…LQGE) and 750–821 (DYKA…VNFG). The Histidine kinase domain maps to 901-1120 (YMKRQIRNPL…ILSVELAAAH (220 aa)).

It belongs to the phytochrome family. As to quaternary structure, homodimer. Post-translationally, contains one covalently linked phytochromobilin chromophore.

Regulatory photoreceptor which exists in two forms that are reversibly interconvertible by light: the Pr form that absorbs maximally in the red region of the spectrum and the Pfr form that absorbs maximally in the far-red region. Photoconversion of Pr to Pfr induces an array of morphogenic responses, whereas reconversion of Pfr to Pr cancels the induction of those responses. Pfr controls the expression of a number of nuclear genes including those encoding the small subunit of ribulose-bisphosphate carboxylase, chlorophyll A/B binding protein, protochlorophyllide reductase, rRNA, etc. It also controls the expression of its own gene(s) in a negative feedback fashion. This chain is Phytochrome A (PHYA), found in Pisum sativum (Garden pea).